A 218-amino-acid polypeptide reads, in one-letter code: MGQKINPLGFRLGTTQDHYSLWFAQPKNFFEGLQEDQKIRNCIKNYVQKNMKISSGVEGIGHIEIQKRIDVIQVIIYLGFPKFLTEGKPKRIKELQINVQKELNCMNRKLNISITRIENPYMHPNVLAEFIAGQLKNRVSFRKAMKKAIELTEQSNTKGIQVQIAGRLDGKEIARAEWVREGRVPLQTLRAKINYCSYTVRTIYGVLGIKIWIFVDEE.

The KH type-2 domain maps to 43–118 (IKNYVQKNMK…KLNISITRIE (76 aa)).

Belongs to the universal ribosomal protein uS3 family. In terms of assembly, part of the 30S ribosomal subunit.

The protein localises to the plastid. Its subcellular location is the chloroplast. The protein is Small ribosomal subunit protein uS3c (rps3) of Populus trichocarpa (Western balsam poplar).